We begin with the raw amino-acid sequence, 75 residues long: Cytochrome c oxidase subunit 6C (75 aa).

The Mitochondrial matrix portion of the chain corresponds to Met1–Gly13. The chain crosses the membrane as a helical span at residues Leu14–Lys54. At Asn55–Lys75 the chain is on the mitochondrial intermembrane side.

The protein belongs to the cytochrome c oxidase subunit 6c family. In terms of assembly, component of the cytochrome c oxidase (complex IV, CIV), a multisubunit enzyme composed of 14 subunits. The complex is composed of a catalytic core of 3 subunits MT-CO1, MT-CO2 and MT-CO3, encoded in the mitochondrial DNA, and 11 supernumerary subunits COX4I, COX5A, COX5B, COX6A, COX6B, COX6C, COX7A, COX7B, COX7C, COX8 and NDUFA4, which are encoded in the nuclear genome. The complex exists as a monomer or a dimer and forms supercomplexes (SCs) in the inner mitochondrial membrane with NADH-ubiquinone oxidoreductase (complex I, CI) and ubiquinol-cytochrome c oxidoreductase (cytochrome b-c1 complex, complex III, CIII), resulting in different assemblies (supercomplex SCI(1)III(2)IV(1) and megacomplex MCI(2)III(2)IV(2)).

It localises to the mitochondrion inner membrane. The protein operates within energy metabolism; oxidative phosphorylation. Its function is as follows. Component of the cytochrome c oxidase, the last enzyme in the mitochondrial electron transport chain which drives oxidative phosphorylation. The respiratory chain contains 3 multisubunit complexes succinate dehydrogenase (complex II, CII), ubiquinol-cytochrome c oxidoreductase (cytochrome b-c1 complex, complex III, CIII) and cytochrome c oxidase (complex IV, CIV), that cooperate to transfer electrons derived from NADH and succinate to molecular oxygen, creating an electrochemical gradient over the inner membrane that drives transmembrane transport and the ATP synthase. Cytochrome c oxidase is the component of the respiratory chain that catalyzes the reduction of oxygen to water. Electrons originating from reduced cytochrome c in the intermembrane space (IMS) are transferred via the dinuclear copper A center (CU(A)) of subunit 2 and heme A of subunit 1 to the active site in subunit 1, a binuclear center (BNC) formed by heme A3 and copper B (CU(B)). The BNC reduces molecular oxygen to 2 water molecules using 4 electrons from cytochrome c in the IMS and 4 protons from the mitochondrial matrix. The polypeptide is Cytochrome c oxidase subunit 6C (COX6C) (Plecturocebus donacophilus (Bolivian gray titi monkey)).